A 366-amino-acid polypeptide reads, in one-letter code: Sulfate/thiosulfate import ATP-binding protein CysA 2 (366 aa).

Residues 14-243 form the ABC transporter domain; that stretch reads LSVHALCRRF…PASRFVAEFV (230 aa). Residue 46–53 participates in ATP binding; sequence GPSGCGKT.

This sequence belongs to the ABC transporter superfamily. Sulfate/tungstate importer (TC 3.A.1.6) family. The complex is composed of two ATP-binding proteins (CysA), two transmembrane proteins (CysT and CysW) and a solute-binding protein (CysP).

It is found in the cell inner membrane. It catalyses the reaction sulfate(out) + ATP + H2O = sulfate(in) + ADP + phosphate + H(+). The catalysed reaction is thiosulfate(out) + ATP + H2O = thiosulfate(in) + ADP + phosphate + H(+). Its function is as follows. Part of the ABC transporter complex CysAWTP involved in sulfate/thiosulfate import. Responsible for energy coupling to the transport system. The protein is Sulfate/thiosulfate import ATP-binding protein CysA 2 of Chromobacterium violaceum (strain ATCC 12472 / DSM 30191 / JCM 1249 / CCUG 213 / NBRC 12614 / NCIMB 9131 / NCTC 9757 / MK).